The primary structure comprises 246 residues: Phosphomannomutase 2 (246 aa).

Residue alanine 2 is modified to N-acetylalanine. The active-site Nucleophile is the aspartate 12. Mg(2+)-binding residues include aspartate 12 and aspartate 14. The active-site Proton donor/acceptor is aspartate 14. Residues arginine 21, arginine 123, arginine 134, and arginine 141 each contribute to the alpha-D-mannose 1-phosphate site. Lysine 149 carries the N6-acetyllysine modification. 2 residues coordinate alpha-D-mannose 1-phosphate: serine 179 and aspartate 181. Mg(2+) is bound by residues aspartate 209, phenylalanine 221, aspartate 223, and threonine 226.

This sequence belongs to the eukaryotic PMM family. In terms of assembly, homodimer.

The protein localises to the cytoplasm. It carries out the reaction alpha-D-mannose 1-phosphate = D-mannose 6-phosphate. It functions in the pathway nucleotide-sugar biosynthesis; GDP-alpha-D-mannose biosynthesis; alpha-D-mannose 1-phosphate from D-fructose 6-phosphate: step 2/2. Functionally, involved in the synthesis of the GDP-mannose and dolichol-phosphate-mannose required for a number of critical mannosyl transfer reactions. The sequence is that of Phosphomannomutase 2 (PMM2) from Macaca fascicularis (Crab-eating macaque).